The primary structure comprises 397 residues: Chalcone synthase 2 (397 aa).

Residue Cys168 is part of the active site.

The protein belongs to the thiolase-like superfamily. Chalcone/stilbene synthases family.

It carries out the reaction (E)-4-coumaroyl-CoA + 3 malonyl-CoA + 3 H(+) = 2',4,4',6'-tetrahydroxychalcone + 3 CO2 + 4 CoA. The protein operates within secondary metabolite biosynthesis; flavonoid biosynthesis. Its function is as follows. The primary product of this enzyme is 4,2',4',6'-tetrahydroxychalcone (also termed naringenin-chalcone or chalcone) which can under specific conditions spontaneously isomerize into naringenin. In Daucus carota (Wild carrot), this protein is Chalcone synthase 2 (CHS2).